A 186-amino-acid polypeptide reads, in one-letter code: Inosine/xanthosine triphosphatase (186 aa).

Q75 provides a ligand contact to Mg(2+).

This sequence belongs to the YjjX NTPase family. In terms of assembly, homodimer. Mg(2+) is required as a cofactor. It depends on Mn(2+) as a cofactor.

It catalyses the reaction XTP + H2O = XDP + phosphate + H(+). The enzyme catalyses ITP + H2O = IDP + phosphate + H(+). Phosphatase that hydrolyzes non-canonical purine nucleotides such as XTP and ITP to their respective diphosphate derivatives. Probably excludes non-canonical purines from DNA/RNA precursor pool, thus preventing their incorporation into DNA/RNA and avoiding chromosomal lesions. This is Inosine/xanthosine triphosphatase from Shewanella baltica (strain OS195).